The primary structure comprises 353 residues: D-alanine--D-alanine ligase (353 aa).

The ATP-grasp domain occupies 141–349 (KAAFAAAGLP…LPDLVAQLVH (209 aa)). Residue 176–231 (EAELGYPCFVKPANMGSSVGISKARHRDQLLAGLKEAARHDTRLVVEHGVSARELE) coordinates ATP. Mg(2+) is bound by residues D302, E316, and N318.

It belongs to the D-alanine--D-alanine ligase family. The cofactor is Mg(2+). Mn(2+) is required as a cofactor.

It localises to the cytoplasm. It carries out the reaction 2 D-alanine + ATP = D-alanyl-D-alanine + ADP + phosphate + H(+). It participates in cell wall biogenesis; peptidoglycan biosynthesis. Its function is as follows. Cell wall formation. The chain is D-alanine--D-alanine ligase from Synechococcus sp. (strain CC9311).